Consider the following 355-residue polypeptide: Hyaluronan and proteoglycan link protein 1 (355 aa).

A propeptide spanning residues 1–9 is cleaved from the precursor; that stretch reads MTSLLFLVL. 2 N-linked (GlcNAc...) asparagine glycosylation sites follow: N21 and N56. One can recognise an Ig-like V-type domain in the interval 38 to 156; that stretch reads PRLLVVAEQA…EDDTAVVALN (119 aa). 5 disulfide bridges follow: C61–C140, C182–C253, C206–C227, C280–C350, and C305–C326. Link domains lie at 160–255 and 260–352; these read VVFP…FCFT and GRFY…YCFR.

This sequence belongs to the HAPLN family.

It localises to the secreted. The protein localises to the extracellular space. The protein resides in the extracellular matrix. In terms of biological role, stabilizes the aggregates of proteoglycan monomers with hyaluronic acid in the extracellular cartilage matrix. The protein is Hyaluronan and proteoglycan link protein 1 (HAPLN1) of Gallus gallus (Chicken).